We begin with the raw amino-acid sequence, 507 residues long: ATP synthase subunit alpha, chloroplastic (507 aa).

170-177 (GDRQTGKT) is a binding site for ATP.

The protein belongs to the ATPase alpha/beta chains family. F-type ATPases have 2 components, CF(1) - the catalytic core - and CF(0) - the membrane proton channel. CF(1) has five subunits: alpha(3), beta(3), gamma(1), delta(1), epsilon(1). CF(0) has four main subunits: a, b, b' and c.

It is found in the plastid. The protein resides in the chloroplast thylakoid membrane. The catalysed reaction is ATP + H2O + 4 H(+)(in) = ADP + phosphate + 5 H(+)(out). Functionally, produces ATP from ADP in the presence of a proton gradient across the membrane. The alpha chain is a regulatory subunit. This chain is ATP synthase subunit alpha, chloroplastic, found in Eucalyptus globulus subsp. globulus (Tasmanian blue gum).